The following is a 514-amino-acid chain: Maturase K (514 aa).

The protein belongs to the intron maturase 2 family. MatK subfamily.

It is found in the plastid. The protein resides in the chloroplast. Functionally, usually encoded in the trnK tRNA gene intron. Probably assists in splicing its own and other chloroplast group II introns. The polypeptide is Maturase K (Lepidozamia peroffskyana (Peroffsky's lepidozamia)).